Reading from the N-terminus, the 843-residue chain is MNCCWQVVEPCYKSALSYLCVKVGNICMLKENLVLLKSAFDELKAEKEDVVNRVNAGELKGGQRLAIVATWLSQVEIIEENTKQLMDVASARDASSQNASAVRRRLSTSGCWFSTCNLGEKVFKKLTEVKSLSGKDFQEVTEQPPPPVVEVRLCQQTVGLDTTLEKTWESLRKDENRMLGIFGMGGVGKTTLLTLINNKFVEVSDDYDVVIWVESSKDADVGKIQDAIGERLHICDNNWSTYSRGKKASEISRVLRDMKPRFVLLLDDLWEDVSLTAIGIPVLGKKYKVVFTTRSKDVCSVMRANEDIEVQCLSENDAWDLFDMKVHCDGLNEISDIAKKIVAKCCGLPLALEVIRKTMASKSTVIQWRRALDTLESYRSEMKGTEKGIFQVLKLSYDYLKTKNAKCFLYCALFPKAYYIKQDELVEYWIGEGFIDEKDGRERAKDRGYEIIDNLVGAGLLLESNKKVYMHDMIRDMALWIVSEFRDGERYVVKTDAGLSQLPDVTDWTTVTKMSLFNNEIKNIPDDPEFPDQTNLVTLFLQNNRLVDIVGKFFLVMSTLVVLDLSWNFQITELPKGISALVSLRLLNLSGTSIKHLPEGLGVLSKLIHLNLESTSNLRSVGLISELQKLQVLRFYGSAAALDCCLLKILEQLKGLQLLTVTVNNDSVLEEFLGSTRLAGMTQGIYLEGLKVSFAAIGTLSSLHKLEMVNCDITESGTEWEGKRRDQYSPSTSSSEITPSNPWFKDLSAVVINSCIHLKDLTWLMYAANLESLSVESSPKMTELINKEKAQGVGVDPFQELQVLRLHYLKELGSIYGSQVSFPKLKLNKVDIENCPNLHQRPL.

The stretch at 28–58 forms a coiled coil; that stretch reads MLKENLVLLKSAFDELKAEKEDVVNRVNAGE. An NB-ARC domain is found at 141–440; that stretch reads TEQPPPPVVE…GEGFIDEKDG (300 aa). 183 to 190 serves as a coordination point for ATP; that stretch reads GMGGVGKT. LRR repeat units lie at residues 510-531, 535-556, 559-581, 583-604, and 606-628; these read TVTKMSLFNNEIKNIPDDPEFP, NLVTLFLQNNRLVDIVGKFFLV, TLVVLDLSWNFQITELPKGISAL, SLRLLNLSGTSIKHLPEGLGVL, and KLIHLNLESTSNLRSVGLISELQ.

Belongs to the disease resistance NB-LRR family.

Its function is as follows. Probable disease resistance protein. In Arabidopsis thaliana (Mouse-ear cress), this protein is Probable disease resistance protein At5g47250.